A 156-amino-acid chain; its full sequence is Large ribosomal subunit protein uL15 (156 aa).

The span at 1–11 (MKLNDLRDKPG) shows a compositional bias: basic and acidic residues. The tract at residues 1 to 44 (MKLNDLRDKPGSVKARKRVGRGIGSGTGKTGGRGVKGQKSRSGV) is disordered. Residues 21–35 (RGIGSGTGKTGGRGV) show a composition bias toward gly residues.

Belongs to the universal ribosomal protein uL15 family. In terms of assembly, part of the 50S ribosomal subunit.

Its function is as follows. Binds to the 23S rRNA. The polypeptide is Large ribosomal subunit protein uL15 (Brucella abortus (strain S19)).